Reading from the N-terminus, the 300-residue chain is Tyrosine recombinase XerC (300 aa).

The Core-binding (CB) domain occupies 2–88 (TQEGKLEQQF…SLRSFYTFLL (87 aa)). In terms of domain architecture, Tyr recombinase spans 109-294 (RLPKFFYSEE…TKEHLKSTYM (186 aa)). Catalysis depends on residues Arg-150, Lys-174, His-246, Arg-249, and His-272. Tyr-281 serves as the catalytic O-(3'-phospho-DNA)-tyrosine intermediate.

It belongs to the 'phage' integrase family. XerC subfamily. Forms a cyclic heterotetrameric complex composed of two molecules of XerC and two molecules of XerD.

It is found in the cytoplasm. Site-specific tyrosine recombinase, which acts by catalyzing the cutting and rejoining of the recombining DNA molecules. The XerC-XerD complex is essential to convert dimers of the bacterial chromosome into monomers to permit their segregation at cell division. It also contributes to the segregational stability of plasmids. The chain is Tyrosine recombinase XerC from Listeria monocytogenes serotype 4a (strain HCC23).